The chain runs to 139 residues: MKKTTIINAQLSYAIATLGHTETLTLCDAGLPIPNSSNRIDLALTKGIPSFLETLYAVTSEMFVERAILASEIKEKNPEILTALLAHLSQLATKQGNQIPVEFVSHEKFKKLTHDSKGIVRSGECSPYANIILVSGVPF.

Catalysis depends on histidine 20, which acts as the Proton donor. Residues aspartate 28, histidine 106, and 128 to 130 each bind substrate; that span reads YAN.

This sequence belongs to the RbsD / FucU family. RbsD subfamily. As to quaternary structure, homodecamer.

Its subcellular location is the cytoplasm. It catalyses the reaction beta-D-ribopyranose = beta-D-ribofuranose. Its pathway is carbohydrate metabolism; D-ribose degradation; D-ribose 5-phosphate from beta-D-ribopyranose: step 1/2. Functionally, catalyzes the interconversion of beta-pyran and beta-furan forms of D-ribose. The protein is D-ribose pyranase of Actinobacillus succinogenes (strain ATCC 55618 / DSM 22257 / CCUG 43843 / 130Z).